Here is a 147-residue protein sequence, read N- to C-terminus: Lysozyme C, intestinal isozyme (147 aa).

The signal sequence occupies residues methionine 1–glycine 18. The region spanning lysine 19–leucine 147 is the C-type lysozyme domain. Cystine bridges form between cysteine 24–cysteine 145, cysteine 48–cysteine 133, cysteine 83–cysteine 99, and cysteine 95–cysteine 113. Active-site residues include glutamate 53 and aspartate 71.

Belongs to the glycosyl hydrolase 22 family.

It catalyses the reaction Hydrolysis of (1-&gt;4)-beta-linkages between N-acetylmuramic acid and N-acetyl-D-glucosamine residues in a peptidoglycan and between N-acetyl-D-glucosamine residues in chitodextrins.. Functionally, lysozymes have primarily a bacteriolytic function; those in tissues and body fluids are associated with the monocyte-macrophage system and enhance the activity of immunoagents. This is Lysozyme C, intestinal isozyme from Bos taurus (Bovine).